A 32-amino-acid chain; its full sequence is Calcitonin (32 aa).

A disulfide bridge connects residues cysteine 1 and cysteine 7. At proline 32 the chain carries Proline amide.

It belongs to the calcitonin family.

Its subcellular location is the secreted. Causes a rapid but short-lived drop in the level of calcium and phosphate in blood by promoting the incorporation of those ions in the bones. The sequence is that of Calcitonin from Anguilla japonica (Japanese eel).